Here is a 274-residue protein sequence, read N- to C-terminus: Large ribosomal subunit protein uL2cz/uL2cy (274 aa).

The segment at 224–253 is disordered; that stretch reads NPIDHPHGGGEGRAPIGRKKPTTPWGYPAL.

This sequence belongs to the universal ribosomal protein uL2 family. Part of the 50S ribosomal subunit.

The protein resides in the plastid. The protein is Large ribosomal subunit protein uL2cz/uL2cy (rpl2-A) of Epifagus virginiana (Beechdrops).